Reading from the N-terminus, the 522-residue chain is GMP synthase [glutamine-hydrolyzing] (522 aa).

Residues 9-204 (KILILDFGAQ…VVDICGCQTL (196 aa)) form the Glutamine amidotransferase type-1 domain. The active-site Nucleophile is cysteine 86. Residues histidine 178 and glutamate 180 contribute to the active site. One can recognise a GMPS ATP-PPase domain in the interval 205–397 (WTAANIIEDQ…LGLPHAMVYR (193 aa)). 232–238 (SGGVDSS) lines the ATP pocket.

Homodimer.

The enzyme catalyses XMP + L-glutamine + ATP + H2O = GMP + L-glutamate + AMP + diphosphate + 2 H(+). The protein operates within purine metabolism; GMP biosynthesis; GMP from XMP (L-Gln route): step 1/1. Catalyzes the synthesis of GMP from XMP. This Xylella fastidiosa (strain M12) protein is GMP synthase [glutamine-hydrolyzing].